The chain runs to 717 residues: MFKDKKMLKYIVIYSIIAFGILLTFNMVKDEMLYEKVDYSTFMQMLDKKEVKSVNFSGNQIEITPSDSSNLKGKILYTTNPAVAGITQPELIKDLTVAGVEFNVTKPENYQLLGLLMSWVFPLILIFFVGRMMFSKMNNKMGGGVMSFGKNNAKLYAENETGITFKDVAGQDEAKESLVEIVDFLHDTRKYVEIGAKLPKGALLVGPPGTGKTLLAKAVAGEAKVPFFSMSGSDFVEMFVGMGAARVRDLFKQAEEKAPCIVFIDEIDAIGKSRDGAIQGNDEREQTLNQLLTEMDGFDSSKGVVILAATNRPEVLDKALLRPGRFDRRIIVDRPDLIGREEILKVHSRDVKLSDDVSLEEIAKSTPGAVGADLANIVNEAALRAVKHGRKFVIQEDLDEAVEVIIAGQEKRDRILSPKEKKIVAYHEVGHALVAALLNNTDPVHKITIVPRTMGALGYTMQLPEEEKYLVSKEEMIDQISVMLGGRAAEEVVFNSITTGASNDIERATQSARNMITIYGMSERFDMMALEAMSNRYLDGRPVRNCSETTAAIADEEVLQVIKKAHEKSIKILIENRELLDEITGVLLDKETIMGDEFMEIVYGKYPEKREADEKAKKEIQSLREQALAKRKEKEEAIKKAREEALRLEEEQRKQDELKAMIEAQEEAAKLARANNEANNDALDSSKENEEVKSNVNDGATEEKKDDSSTNNKVDGE.

The Cytoplasmic portion of the chain corresponds to M1–M7. A helical transmembrane segment spans residues L8–V28. Residues K29–N109 are Extracellular-facing. Residues Y110–G130 form a helical membrane-spanning segment. Topologically, residues R131–E717 are cytoplasmic. G206–T213 is a binding site for ATP. A Zn(2+)-binding site is contributed by H427. E428 is a catalytic residue. Zn(2+) is bound by residues H431 and D504. A disordered region spans residues K670–E717. Composition is skewed to basic and acidic residues over residues D684–K693 and T701–E717.

In the central section; belongs to the AAA ATPase family. This sequence in the C-terminal section; belongs to the peptidase M41 family. Homohexamer. It depends on Zn(2+) as a cofactor.

Its subcellular location is the cell membrane. Acts as a processive, ATP-dependent zinc metallopeptidase for both cytoplasmic and membrane proteins. Plays a role in the quality control of integral membrane proteins. In Clostridium perfringens (strain ATCC 13124 / DSM 756 / JCM 1290 / NCIMB 6125 / NCTC 8237 / Type A), this protein is ATP-dependent zinc metalloprotease FtsH.